The following is a 52-amino-acid chain: Large ribosomal subunit protein bL33 (52 aa).

Belongs to the bacterial ribosomal protein bL33 family.

The chain is Large ribosomal subunit protein bL33 (rpmG) from Chlamydia muridarum (strain MoPn / Nigg).